Here is a 495-residue protein sequence, read N- to C-terminus: Glucose-6-phosphate 1-dehydrogenase (495 aa).

Residues 11–18 (GASGDLAK), arginine 45, 84–85 (DV), and lysine 147 each bind NADP(+). Substrate-binding residues include histidine 177, lysine 181, glutamate 215, and aspartate 234. Histidine 239 serves as the catalytic Proton acceptor. Residues lysine 339 and lysine 344 each contribute to the substrate site.

The protein belongs to the glucose-6-phosphate dehydrogenase family.

The enzyme catalyses D-glucose 6-phosphate + NADP(+) = 6-phospho-D-glucono-1,5-lactone + NADPH + H(+). The protein operates within carbohydrate degradation; pentose phosphate pathway; D-ribulose 5-phosphate from D-glucose 6-phosphate (oxidative stage): step 1/3. Catalyzes the oxidation of glucose 6-phosphate to 6-phosphogluconolactone. The sequence is that of Glucose-6-phosphate 1-dehydrogenase from Streptococcus pneumoniae serotype 4 (strain ATCC BAA-334 / TIGR4).